Reading from the N-terminus, the 861-residue chain is Glucans biosynthesis glucosyltransferase H (861 aa).

The next 6 membrane-spanning stretches (helical) occupy residues 142–162, 188–208, 516–536, 573–593, 600–620, and 683–703; these read FILL…MKGI, VLPY…FCWV, VFLT…FLVL, LFST…MLIW, FGGV…SVLL, and FLWW…VSVI.

The protein belongs to the glycosyltransferase 2 family. OpgH subfamily.

Its subcellular location is the cell inner membrane. It functions in the pathway glycan metabolism; osmoregulated periplasmic glucan (OPG) biosynthesis. Involved in the biosynthesis of osmoregulated periplasmic glucans (OPGs). This is Glucans biosynthesis glucosyltransferase H from Pseudomonas aeruginosa (strain UCBPP-PA14).